Consider the following 585-residue polypeptide: MFRTHTCGELRISDVNKQVKLSGWVQRSRKMGGMTFVDLRDRYGITQLVFNEEIDAELCERANKLGREFVIQIVGTVNERFSKNSHIPTGDIEIIVSELNILNSAITPPFTIEDNTDGGDDIRMKYRYLDLRRSAVRSNLELRHKMTIEVRSYLDKLGFLEVETPVLIGSTPEGARDFVVPSRMNPGQFYALPQSPQTLKQLLMVSGFDRYFQIAKCFRDEDLRADRQPEFTQIDCEMSFVEQEDVITTFEGMAKHLFKVIRNIELTGPFPRMPWSEAMRLYGSDKPDIRFGMQFVELMDILKGHGFSVFDNATYIGGICAEGAAGYTRKQLDALTEFVKKPQIGAKGMVYARIEADGTVKSSVDKFYIQEVLQQLKEAFGAKPGDLILILSGDDAMKTRKQLCELRLEMGNQLGLRDKNTFACLWVVDFPLFEWSEEEGRLMAMHHPFTSPKPEDIHLLDTNPAAVRANAYDMVINGVEVGGGSIRIHDSQLQNKMFELLGFTPERAQEQFGFLMNAFKFGAPPHGGLAYGLDRWVSLFAGLDSIRDCIAFPKNNSGRDVMLDAPAALDPSQLEELNLIVDIKE.

L-aspartate is bound at residue glutamate 173. The interval 197-200 (QTLK) is aspartate. Arginine 219 is a binding site for L-aspartate. Residues 219 to 221 (RDE) and glutamine 228 each bind ATP. L-aspartate is bound at residue histidine 446. Position 480 (glutamate 480) interacts with ATP. L-aspartate is bound at residue arginine 487. 532-535 (GLDR) contacts ATP.

This sequence belongs to the class-II aminoacyl-tRNA synthetase family. Type 1 subfamily. In terms of assembly, homodimer.

Its subcellular location is the cytoplasm. It catalyses the reaction tRNA(Asp) + L-aspartate + ATP = L-aspartyl-tRNA(Asp) + AMP + diphosphate. Functionally, catalyzes the attachment of L-aspartate to tRNA(Asp) in a two-step reaction: L-aspartate is first activated by ATP to form Asp-AMP and then transferred to the acceptor end of tRNA(Asp). The sequence is that of Aspartate--tRNA ligase from Bacteroides fragilis (strain YCH46).